Here is a 128-residue protein sequence, read N- to C-terminus: Large ribosomal subunit protein bL17 (128 aa).

The protein belongs to the bacterial ribosomal protein bL17 family. As to quaternary structure, part of the 50S ribosomal subunit. Contacts protein L32.

This Pseudomonas entomophila (strain L48) protein is Large ribosomal subunit protein bL17.